The chain runs to 400 residues: Mu-type opioid receptor (400 aa).

The Extracellular portion of the chain corresponds to 1 to 68; it reads MDSSAVPANA…CPPTGSPSMI (68 aa). Residues Asn-9, Asn-12, Asn-33, Asn-40, and Asn-48 are each glycosylated (N-linked (GlcNAc...) asparagine). The helical transmembrane segment at 69-93 threads the bilayer; it reads TAITIMALYSIVCVVGLFGNFLVMY. Topologically, residues 94–106 are cytoplasmic; that stretch reads VIVRYTKMKTATN. The chain crosses the membrane as a helical span at residues 107-131; the sequence is IYIFNLALADALATSTLPFQSVNYL. The Extracellular segment spans residues 132–142; it reads MGTWPFGTILC. A disulfide bridge connects residues Cys-142 and Cys-219. The chain crosses the membrane as a helical span at residues 143–165; the sequence is KIVISIDYYNMFTSIFTLCTMSV. Residues 166 to 185 lie on the Cytoplasmic side of the membrane; it reads DRYIAVCHPVKALDFRTPRN. Phosphotyrosine is present on Tyr-168. Residues 186–207 form a helical membrane-spanning segment; the sequence is AKIVNVCNWIISSAIGLPVMFM. The Extracellular portion of the chain corresponds to 208–230; that stretch reads ATTKYRQGSIDCTLTFSHPTWYW. The chain crosses the membrane as a helical span at residues 231-255; the sequence is ENLLKICVFIFAFIMPVLIITVCYG. At 256 to 279 the chain is on the cytoplasmic side; sequence LMILRLKSVRMLSGSKEKDRNLRR. A helical transmembrane segment spans residues 280–306; the sequence is ITRMVLVVVAVFIVCWTPIHIYVIIKA. Residues 307–314 lie on the Extracellular side of the membrane; the sequence is LVTIPETT. Residues 315-338 form a helical membrane-spanning segment; sequence FQTVSWHFCIALGYTNSCLNPVLY. Positions 334–338 match the NPxxY; plays a role in stabilizing the activated conformation of the receptor motif; it reads NPVLY. Over 339 to 400 the chain is Cytoplasmic; it reads AFLDENFKRC…NLEAETAPLP (62 aa). Cys-353 carries S-palmitoyl cysteine lipidation. Ser-365 is subject to Phosphoserine. Residue Thr-372 is modified to Phosphothreonine. Ser-377 is subject to Phosphoserine. Thr-396 is modified (phosphothreonine).

Belongs to the G-protein coupled receptor 1 family. As to quaternary structure, forms homooligomers and heterooligomers with other GPCRs, such as OPRD1, OPRK1, OPRL1, NPFFR2, ADRA2A, SSTR2, CNR1 and CCR5 (probably in dimeric forms). Interacts with heterotrimeric G proteins; interaction with a heterotrimeric complex containing GNAI1, GNB1 and GNG2 stabilizes the active conformation of the receptor and increases its affinity for endomorphin-2, the synthetic opioid peptide DAMGO and for morphinan agonists. Interacts with PPL; the interaction disrupts agonist-mediated G-protein activation. Interacts (via C-terminus) with DNAJB4 (via C-terminus). Interacts with calmodulin; the interaction inhibits the constitutive activity of OPRM1; it abolishes basal and attenuates agonist-stimulated G-protein coupling. Interacts with FLNA, PLD2, RANBP9 and WLS and GPM6A. Interacts with RTP4. Interacts with SYP and GNAS. Interacts with RGS9, RGS17, RGS20, RGS4, PPP1R9B and HINT1. In terms of processing, phosphorylated. Differentially phosphorylated in basal and agonist-induced conditions. Agonist-mediated phosphorylation modulates receptor internalization. Phosphorylated by GRK2 in a agonist-dependent manner. Phosphorylation at Tyr-168 requires receptor activation, is dependent on non-receptor protein tyrosine kinase Src and results in a decrease in agonist efficacy by reducing G-protein coupling efficiency. Phosphorylated on tyrosine residues; the phosphorylation is involved in agonist-induced G-protein-independent receptor down-regulation. Phosphorylation at Ser-377 is involved in G-protein-dependent but not beta-arrestin-dependent activation of the ERK pathway. Post-translationally, ubiquitinated. A basal ubiquitination seems not to be related to degradation. Ubiquitination is increased upon formation of OPRM1:OPRD1 oligomers leading to proteasomal degradation; the ubiquitination is diminished by RTP4.

It localises to the cell membrane. The protein localises to the cell projection. It is found in the axon. The protein resides in the perikaryon. Its subcellular location is the dendrite. It localises to the endosome. In terms of biological role, receptor for endogenous opioids such as beta-endorphin and endomorphin. Receptor for natural and synthetic opioids including morphine, heroin, DAMGO, fentanyl, etorphine, buprenorphin and methadone. Also activated by enkephalin peptides, such as Met-enkephalin or Met-enkephalin-Arg-Phe, with higher affinity for Met-enkephalin-Arg-Phe. Agonist binding to the receptor induces coupling to an inactive GDP-bound heterotrimeric G-protein complex and subsequent exchange of GDP for GTP in the G-protein alpha subunit leading to dissociation of the G-protein complex with the free GTP-bound G-protein alpha and the G-protein beta-gamma dimer activating downstream cellular effectors. The agonist- and cell type-specific activity is predominantly coupled to pertussis toxin-sensitive G(i) and G(o) G alpha proteins, GNAI1, GNAI2, GNAI3 and GNAO1, and to a lesser extent to pertussis toxin-insensitive G alpha proteins GNAZ and GNA15. They mediate an array of downstream cellular responses, including inhibition of adenylate cyclase activity and both N-type and L-type calcium channels, activation of inward rectifying potassium channels, mitogen-activated protein kinase (MAPK), phospholipase C (PLC), phosphoinositide/protein kinase (PKC), phosphoinositide 3-kinase (PI3K) and regulation of NF-kappa-B. Also couples to adenylate cyclase stimulatory G alpha proteins. The selective temporal coupling to G-proteins and subsequent signaling can be regulated by RGSZ proteins, such as RGS9, RGS17 and RGS4. Phosphorylation by members of the GPRK subfamily of Ser/Thr protein kinases and association with beta-arrestins is involved in short-term receptor desensitization. Beta-arrestins associate with the GPRK-phosphorylated receptor and uncouple it from the G-protein thus terminating signal transduction. The phosphorylated receptor is internalized through endocytosis via clathrin-coated pits which involves beta-arrestins. The activation of the ERK pathway occurs either in a G-protein-dependent or a beta-arrestin-dependent manner and is regulated by agonist-specific receptor phosphorylation. Acts as a class A G-protein coupled receptor (GPCR) which dissociates from beta-arrestin at or near the plasma membrane and undergoes rapid recycling. Receptor down-regulation pathways are varying with the agonist and occur dependent or independent of G-protein coupling. Endogenous ligands induce rapid desensitization, endocytosis and recycling. Heterooligomerization with other GPCRs can modulate agonist binding, signaling and trafficking properties. Involved in neurogenesis. In Saimiri boliviensis boliviensis (Bolivian squirrel monkey), this protein is Mu-type opioid receptor (OPRM1).